The chain runs to 392 residues: S-adenosylmethionine synthase (392 aa).

Histidine 20 serves as a coordination point for ATP. Residue aspartate 22 participates in Mg(2+) binding. K(+) is bound at residue glutamate 48. 2 residues coordinate L-methionine: glutamate 61 and glutamine 106. Residues 106-116 (QSQDIINAIKK) are flexible loop. Residues 171–173 (DSK), aspartate 248, 254–255 (RK), alanine 271, and lysine 275 contribute to the ATP site. An L-methionine-binding site is contributed by aspartate 248. An L-methionine-binding site is contributed by lysine 279.

The protein belongs to the AdoMet synthase family. Homotetramer; dimer of dimers. Mg(2+) is required as a cofactor. It depends on K(+) as a cofactor.

It localises to the cytoplasm. It catalyses the reaction L-methionine + ATP + H2O = S-adenosyl-L-methionine + phosphate + diphosphate. It functions in the pathway amino-acid biosynthesis; S-adenosyl-L-methionine biosynthesis; S-adenosyl-L-methionine from L-methionine: step 1/1. In terms of biological role, catalyzes the formation of S-adenosylmethionine (AdoMet) from methionine and ATP. The overall synthetic reaction is composed of two sequential steps, AdoMet formation and the subsequent tripolyphosphate hydrolysis which occurs prior to release of AdoMet from the enzyme. The protein is S-adenosylmethionine synthase of Borrelia garinii subsp. bavariensis (strain ATCC BAA-2496 / DSM 23469 / PBi) (Borreliella bavariensis).